A 1492-amino-acid polypeptide reads, in one-letter code: Collagen alpha-1(II) chain (1492 aa).

An N-terminal signal peptide occupies residues 1-26; the sequence is MFSFVDSRTLVLFAATQVILLAVVRC. Residues 27-186 constitute a propeptide, N-terminal propeptide; the sequence is QDEEDVLATG…PPGLGGNFAA (160 aa). The VWFC domain maps to 36-94; that stretch reads GSCVQHGQRYSDKDVWKPEPCQICVCDTGNVLCDEIICEDPKDCPNAEIPFGECCPICP. Residues 98-1255 are disordered; the sequence is SSTSSGQGVL…ADQASSSVPQ (1158 aa). 2 stretches are compositionally biased toward basic and acidic residues: residues 110 to 121 and 138 to 159; these read QKGEPGDIKDVV and PRGD…RDGE. Over residues 163–178 the composition is skewed to pro residues; the sequence is PGNPGPVGPPGPPGPP. Residues 197 to 208 show a composition bias toward low complexity; the sequence is GGAQMGVMQGPM. The segment at 206-1219 is triple-helical region; sequence GPMGPMGPRG…PGPPGPPGPP (1014 aa). Residues 213-222 show a composition bias toward pro residues; it reads PRGPPGPTGA. Over residues 223-234 the composition is skewed to low complexity; that stretch reads PGPQGFQGNPGE. Over residues 236–245 the composition is skewed to gly residues; that stretch reads GEPGAGGPMG. Residues 256 to 270 show a composition bias toward basic and acidic residues; sequence PGDDGEAGKPGKSGE. Positions 311–320 are enriched in gly residues; sequence GAKGEGGATG. 4 stretches are compositionally biased toward low complexity: residues 321–333, 340–355, 366–376, and 396–436; these read EAGS…PRGL, PGAS…DGLP, PAGAPGFPGAP, and PRGE…AGAP. Pro residues predominate over residues 438 to 447; the sequence is FPGPRGPPGP. Composition is skewed to low complexity over residues 480–490 and 501–517; these read SAGPQGAPGPA and EPGA…RGAP. Residues 539–548 are compositionally biased toward gly residues; that stretch reads GVPGLGGPKG. 2 stretches are compositionally biased toward low complexity: residues 627 to 636 and 645 to 655; these read LLGAPGLRGL and AQGPNGPAGPA. 4-hydroxyproline occurs at positions 664 and 673. At P675 the chain carries 3-hydroxyproline. A 4-hydroxyproline mark is found at P676 and P679. Low complexity predominate over residues 711–741; the sequence is ERGSSGPQGLQGPRGLPGTPGTDGPKGATGP. Positions 769 to 780 are enriched in basic and acidic residues; sequence KGDRGDTGEKGP. Composition is skewed to low complexity over residues 838-850 and 894-910; these read AGFA…DGQA and AQGP…AGRV. 3-hydroxyproline is present on P912. A 4-hydroxyproline mark is found at P913, P919, and P925. The segment covering 919–930 has biased composition (low complexity); the sequence is PGPSGAPGSAGK. A compositionally biased stretch (gly residues) spans 1010–1019; the sequence is GKQGGPGSAG. Residues 1105 to 1114 are compositionally biased toward low complexity; it reads SGPAGARGLP. The segment covering 1120–1134 has biased composition (basic and acidic residues); the sequence is RGDKGEAGEAGERGQ. Low complexity-rich tracts occupy residues 1140–1159 and 1176–1186; these read FTGL…QGAS and PSGKDGSNGLP. 3-hydroxyproline is present on P1149. Position 1186 is a 4-hydroxyproline (P1186). Position 1191 is a 3-hydroxyproline (P1191). 4-hydroxyproline is present on P1192. The span at 1204–1221 shows a compositional bias: pro residues; the sequence is AGPPGQPGPPGPPGPPGP. 3-hydroxyproline is present on P1206. 4-hydroxyproline is present on residues P1207 and P1210. P1212 carries the 3-hydroxyproline modification. P1213 and P1216 each carry 4-hydroxyproline. P1218 carries the post-translational modification 3-hydroxyproline. P1219 carries the 4-hydroxyproline modification. A nonhelical region (C-terminal) region spans residues 1220 to 1246; that stretch reads GPGIDMSAFAGLSQPEKGPDPMRYMRA. The segment covering 1236 to 1245 has biased composition (basic and acidic residues); sequence KGPDPMRYMR. Positions 1247 to 1492 are cleaved as a propeptide — C-terminal propeptide; the sequence is DQASSSVPQR…GVDIGPVCFL (246 aa). The Fibrillar collagen NC1 domain occupies 1258–1492; sequence VDVEATLKSL…GVDIGPVCFL (235 aa). 3 disulfides stabilise this stretch: C1288/C1320, C1328/C1490, and C1398/C1443. Ca(2+) contacts are provided by D1306, N1308, Q1309, C1311, and D1314. N1393 carries an N-linked (GlcNAc...) asparagine glycan.

Belongs to the fibrillar collagen family. As to quaternary structure, homotrimers of alpha 1(II) chains. Post-translationally, contains mostly 4-hydroxyproline. Prolines at the third position of the tripeptide repeating unit (G-X-P) are 4-hydroxylated in some or all of the chains. Contains 3-hydroxyproline at a few sites. This modification occurs on the first proline residue in the sequence motif Gly-Pro-Hyp, where Hyp is 4-hydroxyproline. In terms of processing, lysine residues at the third position of the tripeptide repeating unit (G-X-Y) are 5-hydroxylated in some or all of the chains. Post-translationally, O-glycosylated on hydroxylated lysine residues. The O-linked glycan consists of a Glc-Gal disaccharide.

It is found in the secreted. It localises to the extracellular space. The protein resides in the extracellular matrix. Type II collagen is specific for cartilaginous tissues. It is essential for the normal embryonic development of the skeleton, for linear growth and for the ability of cartilage to resist compressive forces. This is Collagen alpha-1(II) chain from Xenopus tropicalis (Western clawed frog).